Here is a 469-residue protein sequence, read N- to C-terminus: 3-isopropylmalate dehydratase large subunit (469 aa).

Cys-349, Cys-410, and Cys-413 together coordinate [4Fe-4S] cluster.

Belongs to the aconitase/IPM isomerase family. LeuC type 1 subfamily. In terms of assembly, heterodimer of LeuC and LeuD. [4Fe-4S] cluster serves as cofactor.

The enzyme catalyses (2R,3S)-3-isopropylmalate = (2S)-2-isopropylmalate. The protein operates within amino-acid biosynthesis; L-leucine biosynthesis; L-leucine from 3-methyl-2-oxobutanoate: step 2/4. Functionally, catalyzes the isomerization between 2-isopropylmalate and 3-isopropylmalate, via the formation of 2-isopropylmaleate. The polypeptide is 3-isopropylmalate dehydratase large subunit (Neisseria meningitidis serogroup A / serotype 4A (strain DSM 15465 / Z2491)).